Here is a 109-residue protein sequence, read N- to C-terminus: MEKLDKRREEETYLWIPVQFLDQALIAVLKCIGLLCQPAKKTAPSPVTFNQPEEQEEDYGVALKDDDVVVLLRDNKAKSKKRDKEKPSSGRPGQTNSVPNAAIQVYKED.

A propeptide spanning residues 1–73 is cleaved from the precursor; the sequence is MEKLDKRREE…KDDDVVVLLR (73 aa). Over residues 74 to 88 the composition is skewed to basic and acidic residues; the sequence is DNKAKSKKRDKEKPS. The tract at residues 74–109 is disordered; it reads DNKAKSKKRDKEKPSSGRPGQTNSVPNAAIQVYKED.

This sequence belongs to the brassicaceae elicitor peptide family.

Functionally, elicitor of plant defense. This chain is Elicitor peptide 2 (PEP2), found in Arabidopsis thaliana (Mouse-ear cress).